The sequence spans 149 residues: Large ribosomal subunit protein bL9 (149 aa).

The protein belongs to the bacterial ribosomal protein bL9 family.

In terms of biological role, binds to the 23S rRNA. The sequence is that of Large ribosomal subunit protein bL9 from Sulfurihydrogenibium sp. (strain YO3AOP1).